A 471-amino-acid polypeptide reads, in one-letter code: Eremophilane O-acetyltransferase ORF8 (471 aa).

The protein belongs to the fumigaclavine B O-acetyltransferase family. Monomer.

It functions in the pathway sesquiterpene biosynthesis. In terms of biological role, O-acetyltransferase; part of the gene cluster that mediates the biosynthesis of PR-toxin, a bicyclic sesquiterpene belonging to the eremophilane class and acting as a mycotoxin. The first step of the pathway is catalyzed by the aristolochene synthase which performs the cyclization of trans,trans-farnesyl diphosphate (FPP) to the bicyclic sesquiterpene aristolochene. Following the formation of aristolochene, the non-oxygenated aristolochene is converted to the trioxygenated intermediate eremofortin B, via 7-epi-neopetasone. This conversion appears to involve three enzymes, a hydroxysterol oxidase-like enzyme, the quinone-oxidase prx3 that forms the quinone-type-structure in the bicyclic nucleus of aristolochene with the C8-oxo group and the C-3 hydroxyl group, and the P450 monooxygenase ORF6 that introduces the epoxide at the double bond between carbons 1 and 2. No monoxy or dioxy-intermediates have been reported to be released to the broth, so these three early oxidative reactions may be coupled together. Eremofortin B is further oxidized by another P450 monooxygenase, that introduces a second epoxide between carbons 7 and 11 prior to acetylation to eremofortin A by the acetyltransferase ORF8. The second epoxidation may be performed by a second P450 monooxygenase. After the acetylation step, eremofortin A is converted to eremofortin C and then to PR-toxin. First the conversion of eremofortin A to eremofortin C proceeds by oxidation of the side chain of the molecule at C-12 and is catalyzed by the short-chain oxidoreductase prx1. The cytochrome P450 monooxygenase ORF6 is probably also involved in this step. The primary alcohol formed at C-12 is finally oxidized by the short-chain alcohol dehydrogenase prx4 that forms PR-toxin. The chain is Eremophilane O-acetyltransferase ORF8 from Penicillium roqueforti (strain FM164).